Here is a 779-residue protein sequence, read N- to C-terminus: MIISRPLCSFVFAGLSFAVILPAQALVEPGNQAARAEIRRTGFGVPHIVAANERGLGYGIGYAYAQDNLCLLANEVVTVNGQRSRYFGPDKATLEQRNNMASDLLFQWLNTPQALADFWNAQPREIRQLMQGYVAGYNRSLAEQTTQGLPQPCAAEWVRPISTDDLLRLTRRLLVEGGVGQFAEALAGATPPAQQKPLQVDAQQAQALQLAAARNQRFALERGSNAVAIGRELSANGRGMLLANPHFPWGGGMRFYQMHLTIPGKLDVMGAALPGLPLINIGFNQHLAWSHTVDTSKHFTLHRLQLDPKDSTRYLLDGQSVAMGKQQVSVDVKQADGSLKSVPRIVYSSIFGPVVQWPGKLDWDSKFAFSLRDANLQNDRVLQQWYAMDKADSLKAFQDSVRKIQGIPWVNTLAVDAQGQALYMNLSVVPNVDAARLARCSDPRIGTELIVLDGSRSECNWEVSAEAAQAGIYPSSRQPQLLRTDFVQHSNDSAWMVNPAAPLQGFSPLISQDGQPLGQRARFALDRLESLKTAGKISVENLQAMVMDNEVYQAGQVLPDLLTFCASELGDDAARLAPLCAALKDWDGRADLNSGIGFVYFQKIMTSMQAVASRWRVAFDPQDPVHTPSGLAIENPSVATALRAAMLAAVDDVAKAGLPAGSKWGDIQVSSISGKQIPIHGGPAGLGVYNAMQTVAGKDGKREVVSGTSYLQVVTFDEQGPKAQGLLAFSESSNPQSAHSSDQTEAFSKKQWQALPFTEQQIKADPAYEVQVISEEPDR.

An N-terminal signal peptide occupies residues 1–25 (MIISRPLCSFVFAGLSFAVILPAQA). A propeptide spans 202–223 (AQQAQALQLAAARNQRFALERG) (spacer peptide). Serine 224 (nucleophile) is an active-site residue. Polar residues predominate over residues 731–746 (ESSNPQSAHSSDQTEA). The interval 731–750 (ESSNPQSAHSSDQTEAFSKK) is disordered.

The protein belongs to the peptidase S45 family. In terms of assembly, heterodimer of an alpha subunit and a beta subunit processed from the same precursor.

The protein localises to the periplasm. It catalyses the reaction an N-acyl-L-homoserine lactone + H2O = L-homoserine lactone + a carboxylate. Functionally, catalyzes the deacylation of acyl-homoserine lactone (AHL or acyl-HSL), releasing homoserine lactone (HSL) and the corresponding fatty acid. Possesses a specificity for the degradation of long-chain acyl-HSLs (side chains of 11 to 14 carbons in length). The chain is Acyl-homoserine lactone acylase PvdQ (pvdQ) from Pseudomonas syringae pv. syringae (strain B728a).